Reading from the N-terminus, the 227-residue chain is Cytochrome c oxidase subunit 2 (227 aa).

Over 1–14 the chain is Mitochondrial intermembrane; it reads MAYPFQLGLQDATS. The chain crosses the membrane as a helical span at residues 15–45; the sequence is PIMEELMNFHDHTLMIVFLISTLVLYIISLM. Residues 46–59 are Mitochondrial matrix-facing; the sequence is LTTKLTHTSTMDAQ. A helical membrane pass occupies residues 60 to 87; sequence EVETIWTILPAVILILIALPSLRILYMM. Topologically, residues 88 to 227 are mitochondrial intermembrane; the sequence is DEINNPALTV…YFENWSASMI (140 aa). Residues His161, Cys196, Glu198, Cys200, His204, and Met207 each contribute to the Cu cation site. Glu198 contacts Mg(2+). Phosphotyrosine is present on Tyr218.

This sequence belongs to the cytochrome c oxidase subunit 2 family. As to quaternary structure, component of the cytochrome c oxidase (complex IV, CIV), a multisubunit enzyme composed of 14 subunits. The complex is composed of a catalytic core of 3 subunits MT-CO1, MT-CO2 and MT-CO3, encoded in the mitochondrial DNA, and 11 supernumerary subunits COX4I, COX5A, COX5B, COX6A, COX6B, COX6C, COX7A, COX7B, COX7C, COX8 and NDUFA4, which are encoded in the nuclear genome. The complex exists as a monomer or a dimer and forms supercomplexes (SCs) in the inner mitochondrial membrane with NADH-ubiquinone oxidoreductase (complex I, CI) and ubiquinol-cytochrome c oxidoreductase (cytochrome b-c1 complex, complex III, CIII), resulting in different assemblies (supercomplex SCI(1)III(2)IV(1) and megacomplex MCI(2)III(2)IV(2)). Found in a complex with TMEM177, COA6, COX18, COX20, SCO1 and SCO2. Interacts with TMEM177 in a COX20-dependent manner. Interacts with COX20. Interacts with COX16. It depends on Cu cation as a cofactor.

The protein localises to the mitochondrion inner membrane. The enzyme catalyses 4 Fe(II)-[cytochrome c] + O2 + 8 H(+)(in) = 4 Fe(III)-[cytochrome c] + 2 H2O + 4 H(+)(out). Component of the cytochrome c oxidase, the last enzyme in the mitochondrial electron transport chain which drives oxidative phosphorylation. The respiratory chain contains 3 multisubunit complexes succinate dehydrogenase (complex II, CII), ubiquinol-cytochrome c oxidoreductase (cytochrome b-c1 complex, complex III, CIII) and cytochrome c oxidase (complex IV, CIV), that cooperate to transfer electrons derived from NADH and succinate to molecular oxygen, creating an electrochemical gradient over the inner membrane that drives transmembrane transport and the ATP synthase. Cytochrome c oxidase is the component of the respiratory chain that catalyzes the reduction of oxygen to water. Electrons originating from reduced cytochrome c in the intermembrane space (IMS) are transferred via the dinuclear copper A center (CU(A)) of subunit 2 and heme A of subunit 1 to the active site in subunit 1, a binuclear center (BNC) formed by heme A3 and copper B (CU(B)). The BNC reduces molecular oxygen to 2 water molecules using 4 electrons from cytochrome c in the IMS and 4 protons from the mitochondrial matrix. This is Cytochrome c oxidase subunit 2 (MT-CO2) from Maxomys surifer (Indomalayan maxomys).